Here is a 668-residue protein sequence, read N- to C-terminus: MADDLRAGGVLEPIAMVPPRPDLAAEKEPASWKEGLFLDADPCSDQGYHANPGATVKTLIPEGKTPFPRIIQTNELLFYERFRAYQDYILADCKASEVKEFTVSFLEKVLEPSGWWAVWHTNVFEVLVEVTNVDFPSLKAVVRLAEPCIYESKLSTFTLANVKELLDLKEFHLPLQELWVVSDDSHEFHQMALAIEHVRFFYKHIWRSWDEEEEDEYDYFVRCVEPRLRLYYDILEDRVPSGLIVDYHNLLSQCEESYRKFLNLRSSLSNCNSDSEQENISMVEGLNLYSEIEQLKQKLKLIENPLLRYVFGYQKNSNIQGKGTRQNGQKVIHVVSSTMKTGLLRSLFKDRFCEESCKEETEIKFHSDLLSGINACYDGDTVIICPGHYVVHGTCSIADSIELEGYGLPDDIVIEKRGKGDTFVDCTGMDVKISGIKFIQHDSVEGILIIHHGKTTLENCVLQCETTGVTVRTSAELFMKNSDVYGAKGAGIEIYPGSKCTLTDNGIHHCKEGILIKDFLDEHYDIPKISMINNVIHNNEGYGVVLVKPTIFCDLQENTQDEINDNMVQKNKEADVTEGLDLEEMLQCVASKMEPYATADFNEQAKGNCEIINELLAISMQKGRMKKRLSELGITQADDNIMSQEMFIEIMGNQFKWNGKGSFGTFLY.

N-acetylalanine is present on Ala-2. Phosphoserine occurs at positions 31, 44, and 273. 5 PbH1 repeats span residues 428-451, 452-473, 474-496, 497-518, and 526-548; these read GMDVKISGIKFIQHDSVEGILIIH, HGKTTLENCVLQCETTGVTVRT, SAELFMKNSDVYGAKGAGIEIYP, GSKCTLTDNGIHHCKEGILIKD, and IPKISMINNVIHNNEGYGVVLVK. A Phosphoserine modification is found at Ser-630.

In terms of assembly, interacts directly with isoform p52shc of SHC1 via its SH2 domain. Interacts with TRIM71; leading to enhanced SHCBP1 protein stability. Interacts with both members of the centralspindlin complex, KIF23 and RACGAP1. Expressed in spleen, lung and heart with higher expression in testis. No expression in brain, liver and skeletal muscle. Elevated expression in actively cycling cells.

The protein localises to the midbody. The protein resides in the cytoplasm. Its subcellular location is the cytoskeleton. It localises to the spindle. Functionally, may play a role in signaling pathways governing cellular proliferation, cell growth and differentiation. May be a component of a novel signaling pathway downstream of Shc. Acts as a positive regulator of FGF signaling in neural progenitor cells. This Mus musculus (Mouse) protein is SHC SH2 domain-binding protein 1 (Shcbp1).